The sequence spans 265 residues: MMQRLRLARRGLALSAVRRQTVVPEEEPLDAYEREHLKHRIEITPFQRMLLGAGSSVAAILDPRRHDMIACLGETTGEGALWNILDTMEASEEGQRILIDKPRIHTSTIDFKRLETLPPDTFGAAYVKFLKDNNVTPDSRMPVRFLEDPKLAYLMTRYRECHDLIHTVLNMPTNMLGEVAVKWVEALNTNLPMCYGGAVFGAVRLRPKQRREYLKRYLPWAIDNGKRMKPLMPVYWEQRWEQNLDLAKKTSPIMLPALRITRRDG.

His162, Asp163, His166, and Glu178 together coordinate Zn(2+).

The protein belongs to the COQ4 family. As to quaternary structure, component of a multi-subunit COQ enzyme complex. Zn(2+) serves as cofactor.

The protein localises to the mitochondrion inner membrane. The catalysed reaction is a 4-hydroxy-3-methoxy-5-(all-trans-polyprenyl)benzoate + H(+) = a 2-methoxy-6-(all-trans-polyprenyl)phenol + CO2. Its pathway is cofactor biosynthesis; ubiquinone biosynthesis. Functionally, lyase that catalyzes the C1-decarboxylation of 4-hydroxy-3-methoxy-5-(all-trans-polyprenyl)benzoic acid into 2-methoxy-6-(all-trans-polyprenyl)phenol during ubiquinone biosynthesis. The polypeptide is Ubiquinone biosynthesis protein COQ4 homolog, mitochondrial (Drosophila willistoni (Fruit fly)).